Consider the following 86-residue polypeptide: Cell division topological specificity factor (86 aa).

Belongs to the MinE family.

Its function is as follows. Prevents the cell division inhibition by proteins MinC and MinD at internal division sites while permitting inhibition at polar sites. This ensures cell division at the proper site by restricting the formation of a division septum at the midpoint of the long axis of the cell. This chain is Cell division topological specificity factor, found in Shewanella loihica (strain ATCC BAA-1088 / PV-4).